Consider the following 282-residue polypeptide: Undecaprenyl-diphosphatase (282 aa).

Transmembrane regions (helical) follow at residues 40–60, 89–109, 113–133, 150–170, 196–216, 230–250, and 258–278; these read GAAFTAIVQIGTLAAVLIYFM, WMIAAGTIPIVVFGLAFKDDI, LRSLYWVSAALIALALVLSIA, ISEITWLDAMIIGFAQAMALI, FSFLLSLPSVFAAGIYQLYKT, IAVATVFAFIFGYLSIAFLLT, and GIFIGYRLLLGISLIIMIGTG.

It belongs to the UppP family.

It is found in the cell inner membrane. It carries out the reaction di-trans,octa-cis-undecaprenyl diphosphate + H2O = di-trans,octa-cis-undecaprenyl phosphate + phosphate + H(+). Its function is as follows. Catalyzes the dephosphorylation of undecaprenyl diphosphate (UPP). Confers resistance to bacitracin. The chain is Undecaprenyl-diphosphatase from Chlorobaculum parvum (strain DSM 263 / NCIMB 8327) (Chlorobium vibrioforme subsp. thiosulfatophilum).